The chain runs to 477 residues: Cysteine--tRNA ligase (477 aa).

A Zn(2+)-binding site is contributed by Cys-28. A 'HIGH' region motif is present at residues 30 to 40 (PTVYDYAHIGN). 3 residues coordinate Zn(2+): Cys-213, His-238, and Glu-242. Positions 270–274 (KMSKS) match the 'KMSKS' region motif. Lys-273 contacts ATP.

It belongs to the class-I aminoacyl-tRNA synthetase family. In terms of assembly, monomer. Requires Zn(2+) as cofactor.

It is found in the cytoplasm. It carries out the reaction tRNA(Cys) + L-cysteine + ATP = L-cysteinyl-tRNA(Cys) + AMP + diphosphate. The chain is Cysteine--tRNA ligase from Chlamydia trachomatis serovar A (strain ATCC VR-571B / DSM 19440 / HAR-13).